A 1135-amino-acid chain; its full sequence is DNA-directed RNA polymerase I subunit RPA2 (1135 aa).

A disordered region spans residues 1-24 (MDPGSRWRNLPSGPSLKHLTDPSY). Residue arginine 180 participates in RNA binding. Residues 194–208 (IRPKWKTRGPGYTQY) form a loop B region. Positions 236–247 (LNFIYRKELFFL) are loop A. Position 367 (aspartate 367) interacts with RNA. 2 fork loop regions span residues 439–453 (LRSK…DSGL) and 474–489 (RGAD…VRRL). Aspartate 755 provides a ligand contact to Mg(2+). Lysine 890 serves as a coordination point for RNA. Positions 1020 and 1036 each coordinate DNA. Serine 1051 is subject to Phosphoserine. Residues cysteine 1070, cysteine 1073, cysteine 1098, and cysteine 1101 each contribute to the Zn(2+) site. The C4-type zinc finger occupies 1070–1101 (CVKCGSLLSPLLEKPPPSWSAMRNRKYNCTLC).

The protein belongs to the RNA polymerase beta chain family. As to quaternary structure, component of the RNA polymerase I (Pol I) complex consisting of 13 subunits: a ten-subunit catalytic core composed of POLR1A/RPA1, POLR1B/RPA2, POLR1C/RPAC1, POLR1D/RPAC2, POLR1H/RPA12, POLR2E/RPABC1, POLR2F/RPABC2, POLR2H/RPABC3, POLR2K/RPABC4 and POLR2L/RPABC5; a mobile stalk subunit POLR1F/RPA43 protruding from the core and additional subunits homologous to general transcription factors POLR1E/RPA49 and POLR1G/RPA34. Part of Pol I pre-initiation complex (PIC), in which Pol I core assembles with RRN3 and promoter-bound UTBF and SL1/TIF-IB complex. The cofactor is Mg(2+).

The protein localises to the nucleus. Its subcellular location is the nucleolus. It localises to the chromosome. The enzyme catalyses RNA(n) + a ribonucleoside 5'-triphosphate = RNA(n+1) + diphosphate. Catalytic core component of RNA polymerase I (Pol I), a DNA-dependent RNA polymerase which synthesizes ribosomal RNA precursors using the four ribonucleoside triphosphates as substrates. Transcribes 47S pre-rRNAs from multicopy rRNA gene clusters, giving rise to 5.8S, 18S and 28S ribosomal RNAs. Pol I-mediated transcription cycle proceeds through transcription initiation, transcription elongation and transcription termination stages. During transcription initiation, Pol I pre-initiation complex (PIC) is recruited by the selectivity factor 1 (SL1/TIF-IB) complex bound to the core promoter that precedes an rDNA repeat unit. The PIC assembly bends the promoter favoring the formation of the transcription bubble and promoter escape. Once the polymerase has escaped from the promoter it enters the elongation phase during which RNA is actively polymerized, based on complementarity with the template DNA strand. Highly processive, assembles in structures referred to as 'Miller trees' where many elongating Pol I complexes queue and transcribe the same rDNA coding regions. At terminator sequences downstream of the rDNA gene, PTRF interacts with Pol I and halts Pol I transcription leading to the release of the RNA transcript and polymerase from the DNA. Forms Pol I active center together with the largest subunit POLR1A/RPA1. Appends one nucleotide at a time to the 3' end of the nascent RNA, with POLR1A/RPA1 contributing a Mg(2+)-coordinating DxDGD motif, and POLR1B/RPA2 participating in the coordination of a second Mg(2+) ion and providing lysine residues believed to facilitate Watson-Crick base pairing between the incoming nucleotide and the template base. Typically, Mg(2+) ions direct a 5' nucleoside triphosphate to form a phosphodiester bond with the 3' hydroxyl of the preceding nucleotide of the nascent RNA, with the elimination of pyrophosphate. Has proofreading activity: Pauses and backtracks to allow the cleavage of a missincorporated nucleotide via POLR1H/RPA12. High Pol I processivity is associated with decreased transcription fidelity. This chain is DNA-directed RNA polymerase I subunit RPA2, found in Homo sapiens (Human).